The chain runs to 389 residues: Large envelope protein (389 aa).

Residue Met1 is modified to N-acetylmethionine. The N-myristoyl glycine; by host moiety is linked to residue Gly2. A pre-S1 region spans residues 2-108; sequence GTNLSVPNPL…PPLRDSHPQA (107 aa). A pre-S region spans residues 2–163; that stretch reads GTNLSVPNPL…FSRTGDPAPN (162 aa). The Virion surface; in external conformation portion of the chain corresponds to 2–170; it reads GTNLSVPNPL…APNMESTTSG (169 aa). Over 2 to 242 the chain is Intravirion; in internal conformation; it reads GTNLSVPNPL…PGYRWMCLRR (241 aa). Residues 74 to 105 form a disordered region; sequence LTTVPAAPPPASTNRQSGRQPTPISPPLRDSH. Polar residues predominate over residues 85 to 95; that stretch reads STNRQSGRQPT. Residues 109–163 are pre-S2; sequence MQWNSTTFHQALLDPRVRGLYFPAGGSSSGTVNPVPTIVSPISSIFSRTGDPAPN. Residues 171-191 form a helical membrane-spanning segment; sequence FLGPLLVLQAGFFLLTRILTI. Residues 192-242 are Intravirion; in external conformation-facing; the sequence is PQSLDSWWTSLNFLGEAPTCPGQNSQSPTSNHSPTSCPPICPGYRWMCLRR. A helical membrane pass occupies residues 243 to 263; it reads FIIFLFILLLCLIFLLVLLDY. Residues 264 to 337 are Virion surface-facing; that stretch reads QGMLPVCPLL…WASVRFSWLS (74 aa). N-linked (GlcNAc...) asparagine; by host glycosylation is present at Asn309. A helical membrane pass occupies residues 338 to 358; that stretch reads LLVPFVQWFAGLSPTVWLSVI. The Intravirion segment spans residues 359–364; it reads WMMWYW. A helical transmembrane segment spans residues 365 to 387; sequence GPSLYNILSPFLPLLPIFFCLWV. Topologically, residues 388 to 389 are virion surface; the sequence is YI.

Belongs to the orthohepadnavirus major surface antigen family. In its internal form (Li-HBsAg), interacts with the capsid protein and with the isoform S. Interacts with host chaperone CANX. As to quaternary structure, associates with host chaperone CANX through its pre-S2 N glycan; this association may be essential for isoform M proper secretion. In terms of assembly, interacts with isoform L. Interacts with the antigens of satellite virus HDV (HDVAgs); this interaction is required for encapsidation of HDV genomic RNA. Post-translationally, isoform M is N-terminally acetylated by host at a ratio of 90%, and N-glycosylated by host at the pre-S2 region. Myristoylated.

The protein localises to the virion membrane. The large envelope protein exists in two topological conformations, one which is termed 'external' or Le-HBsAg and the other 'internal' or Li-HBsAg. In its external conformation the protein attaches the virus to cell receptors and thereby initiating infection. This interaction determines the species specificity and liver tropism. This attachment induces virion internalization predominantly through caveolin-mediated endocytosis. The large envelope protein also assures fusion between virion membrane and endosomal membrane. In its internal conformation the protein plays a role in virion morphogenesis and mediates the contact with the nucleocapsid like a matrix protein. In terms of biological role, the middle envelope protein plays an important role in the budding of the virion. It is involved in the induction of budding in a nucleocapsid independent way. In this process the majority of envelope proteins bud to form subviral lipoprotein particles of 22 nm of diameter that do not contain a nucleocapsid. The chain is Large envelope protein from Hepatitis B virus genotype C subtype adr (isolate Japan/A4/1994) (HBV-C).